The chain runs to 1367 residues: Mediator of RNA polymerase II transcription subunit 23 (1367 aa).

Positions 1343–1367 are disordered; it reads PPQALNSGSPAPQSNQVPASLPVTQ. A compositionally biased stretch (polar residues) spans 1346-1367; it reads ALNSGSPAPQSNQVPASLPVTQ.

It belongs to the Mediator complex subunit 23 family. In terms of assembly, component of the Mediator complex, which is composed of MED1, MED4, MED6, MED7, MED8, MED9, MED10, MED11, MED12, MED13, MED13L, MED14, MED15, MED16, MED17, MED18, MED19, MED20, MED21, MED22, MED23, MED24, MED25, MED26, MED27, MED29, MED30, MED31, CCNC, CDK8 and CDC2L6/CDK11. The MED12, MED13, CCNC and CDK8 subunits form a distinct module termed the CDK8 module. Mediator containing the CDK8 module is less active than Mediator lacking this module in supporting transcriptional activation. Individual preparations of the Mediator complex lacking one or more distinct subunits have been variously termed ARC, CRSP, DRIP, PC2, SMCC and TRAP. Interacts with CEBPB (when not methylated), CTNNB1, and GLI3. Interacts with CDK8 and ELK1.

The protein localises to the nucleus. Functionally, component of the Mediator complex, a coactivator involved in the regulated transcription of nearly all RNA polymerase II-dependent genes. Mediator functions as a bridge to convey information from gene-specific regulatory proteins to the basal RNA polymerase II transcription machinery. Mediator is recruited to promoters by direct interactions with regulatory proteins and serves as a scaffold for the assembly of a functional pre-initiation complex with RNA polymerase II and the general transcription factors. Also required for transcriptional activation subsequent to the assembly of the pre-initiation complex. Required for transcriptional activation by adenovirus E1A protein. Required for ELK1-dependent transcriptional activation in response to activated Ras signaling. The polypeptide is Mediator of RNA polymerase II transcription subunit 23 (Med23) (Mus musculus (Mouse)).